Reading from the N-terminus, the 238-residue chain is Complement C1q-like protein 4 (238 aa).

Residues 1–15 form the signal peptide; the sequence is MVLLLLVAIPLLVHS. The disordered stretch occupies residues 36–101; sequence GPRGPGPDGA…PPGPGPGGVA (66 aa). In terms of domain architecture, Collagen-like spans 53-96; it reads PPGAKGEVGRRGKAGLRGPPGPPGPRGPPGEPGRPGPPGPPGPG. Positions 71–96 are enriched in pro residues; that stretch reads PPGPPGPRGPPGEPGRPGPPGPPGPG. Positions 105-238 constitute a C1q domain; the sequence is GYVPRIAFYA…TFSGFIIYPD (134 aa).

In terms of assembly, forms homooligomers, predominantly dimers or trimers. Forms heterooligomers with C1QL1, C1QL2 and C1QL3, when proteins are coexpressed; this interaction does not occur after secretion. Interacts with ADGRB3. Highest expression levels in testis and adipose tissue, lower levels in skeletal muscle and kidney.

It is found in the secreted. In terms of biological role, may regulate the number of excitatory synapses that are formed on hippocampus neurons. Has no effect on inhibitory synapses. May inhibit adipocyte differentiation at an early stage of the process. The sequence is that of Complement C1q-like protein 4 (C1QL4) from Homo sapiens (Human).